Here is a 201-residue protein sequence, read N- to C-terminus: Holliday junction resolvase RecU (201 aa).

Mg(2+) contacts are provided by threonine 87, aspartate 89, glutamate 102, and glutamine 121.

It belongs to the RecU family. Requires Mg(2+) as cofactor.

It is found in the cytoplasm. It catalyses the reaction Endonucleolytic cleavage at a junction such as a reciprocal single-stranded crossover between two homologous DNA duplexes (Holliday junction).. Endonuclease that resolves Holliday junction intermediates in genetic recombination. Cleaves mobile four-strand junctions by introducing symmetrical nicks in paired strands. Promotes annealing of linear ssDNA with homologous dsDNA. Required for DNA repair, homologous recombination and chromosome segregation. The protein is Holliday junction resolvase RecU of Listeria monocytogenes serotype 4b (strain F2365).